The sequence spans 369 residues: Guanine nucleotide-binding protein subunit beta-2 (369 aa).

The span at 1 to 24 shows a compositional bias: polar residues; sequence MSTIAGESSSSSKMPENSQPTTTE. Positions 1–28 are disordered; sequence MSTIAGESSSSSKMPENSQPTTTEKGSE. 7 WD repeats span residues 79-109, 121-151, 167-197, 209-241, 253-283, 297-327, and 339-369; these read GHVG…IVWD, MPTT…SVVP, THTS…AIWD, GHTG…LVWD, GHEA…RLFD, SILF…GVWD, and GHEN…RIWA.

Belongs to the WD repeat G protein beta family. As to quaternary structure, g proteins are composed of 3 units, alpha, beta and gamma. Interacts with G protein gamma subunits gpc-1 and gpc-2 and with egl-10 and eat-16.

In terms of biological role, guanine nucleotide-binding proteins (G proteins) are involved as a modulator or transducer in various transmembrane signaling systems. The beta and gamma chains are required for the GTPase activity, for replacement of GDP by GTP, and for G protein-effector interaction. Plays a role in regulating dopamine-mediated locomotion behavior. The polypeptide is Guanine nucleotide-binding protein subunit beta-2 (Caenorhabditis elegans).